A 267-amino-acid chain; its full sequence is Hydroxyethylthiazole kinase (267 aa).

Methionine 44 is a substrate binding site. Residues arginine 120 and threonine 165 each coordinate ATP. Substrate is bound at residue glycine 192.

Belongs to the Thz kinase family. Mg(2+) is required as a cofactor.

The enzyme catalyses 5-(2-hydroxyethyl)-4-methylthiazole + ATP = 4-methyl-5-(2-phosphooxyethyl)-thiazole + ADP + H(+). The protein operates within cofactor biosynthesis; thiamine diphosphate biosynthesis; 4-methyl-5-(2-phosphoethyl)-thiazole from 5-(2-hydroxyethyl)-4-methylthiazole: step 1/1. Its function is as follows. Catalyzes the phosphorylation of the hydroxyl group of 4-methyl-5-beta-hydroxyethylthiazole (THZ). This is Hydroxyethylthiazole kinase from Carboxydothermus hydrogenoformans (strain ATCC BAA-161 / DSM 6008 / Z-2901).